Reading from the N-terminus, the 268-residue chain is Tryptophan synthase alpha chain (268 aa).

Residues Glu-49 and Asp-60 each act as proton acceptor in the active site.

The protein belongs to the TrpA family. As to quaternary structure, tetramer of two alpha and two beta chains.

The catalysed reaction is (1S,2R)-1-C-(indol-3-yl)glycerol 3-phosphate + L-serine = D-glyceraldehyde 3-phosphate + L-tryptophan + H2O. It participates in amino-acid biosynthesis; L-tryptophan biosynthesis; L-tryptophan from chorismate: step 5/5. Its function is as follows. The alpha subunit is responsible for the aldol cleavage of indoleglycerol phosphate to indole and glyceraldehyde 3-phosphate. This chain is Tryptophan synthase alpha chain, found in Salmonella choleraesuis (strain SC-B67).